The primary structure comprises 700 residues: Mitogen-activated protein kinase 9 (700 aa).

The region spanning 107-398 (YRIQEVIGKG…AEEALTDPYF (292 aa)) is the Protein kinase domain. Residues 113-121 (IGKGSYGVV) and lysine 136 each bind ATP. Aspartate 233 acts as the Proton acceptor in catalysis. The residue at position 269 (threonine 269) is a Phosphothreonine. Residues 269-271 (TDY) carry the TXY motif. At tyrosine 271 the chain carries Phosphotyrosine. Positions 475 to 523 (EESNGSGSAIPMERKHASLPRSTTVHSTPIPPKEQPLAASLKSSRPVSD) are disordered.

The protein belongs to the protein kinase superfamily. CMGC Ser/Thr protein kinase family. MAP kinase subfamily. Post-translationally, dually phosphorylated on Thr-269 and Tyr-271, which activates the enzyme.

It catalyses the reaction L-seryl-[protein] + ATP = O-phospho-L-seryl-[protein] + ADP + H(+). It carries out the reaction L-threonyl-[protein] + ATP = O-phospho-L-threonyl-[protein] + ADP + H(+). Activated by threonine and tyrosine phosphorylation. This is Mitogen-activated protein kinase 9 (MPK9) from Oryza sativa subsp. japonica (Rice).